The primary structure comprises 357 residues: Neurogenic differentiation factor 1 (357 aa).

The tract at residues 1-94 (MTKSYSESGL…GPKKKKMTKA (94 aa)) is disordered. Residues 58–78 (EEEDEDEDLEEEEEEEEEEDD) show a composition bias toward acidic residues. Over residues 81-93 (PKRRGPKKKKMTK) the composition is skewed to basic residues. Residues 87–93 (KKKKMTK) carry the Nuclear localization signal motif. The region spanning 101-153 (LRRMKANARERNRMHGLNAALDNLRKVVPCYSKTQKLSKIETLRLAKNYIWAL) is the bHLH domain. S162, S259, S266, and S274 each carry phosphoserine. S336 is subject to Phosphoserine; by CaMK2.

In terms of assembly, efficient DNA-binding requires dimerization with another bHLH protein. Heterodimer with TCF3/E47; the heterodimer is inhibited in presence of ID2, but not NR0B2, to E-box element. Interacts with EP300; the interaction is inhibited by NR0B2. Interacts with RREB1. Interacts with ATOH8. Post-translationally, phosphorylated by MAPK1; phosphorylation regulates heterodimerization and DNA-binding activities. Phosphorylation on Ser-266 and Ser-274 increases transactivation on the insulin promoter in glucose-stimulated insulinoma cells. Phosphorylated. In islet cells, phosphorylated on Ser-274 upon glucose stimulation; which may be required for nuclear localization. In activated neurons, phosphorylated on Ser-336 by CaMK2; which promotes dendritic growth.

Its subcellular location is the cytoplasm. It is found in the nucleus. In terms of biological role, acts as a transcriptional activator: mediates transcriptional activation by binding to E box-containing promoter consensus core sequences 5'-CANNTG-3'. Associates with the p300/CBP transcription coactivator complex to stimulate transcription of the secretin gene as well as the gene encoding the cyclin-dependent kinase inhibitor CDKN1A. Contributes to the regulation of several cell differentiation pathways, like those that promote the formation of early retinal ganglion cells, inner ear sensory neurons, granule cells forming either the cerebellum or the dentate gyrus cell layer of the hippocampus, endocrine islet cells of the pancreas and enteroendocrine cells of the small intestine. Together with PAX6 or SIX3, is required for the regulation of amacrine cell fate specification. Also required for dendrite morphogenesis and maintenance in the cerebellar cortex. Associates with chromatin to enhancer regulatory elements in genes encoding key transcriptional regulators of neurogenesis. The sequence is that of Neurogenic differentiation factor 1 (Neurod1) from Rattus norvegicus (Rat).